The chain runs to 180 residues: Nucleoside triphosphate/diphosphate phosphatase (180 aa).

Arg-26 serves as the catalytic Proton donor. Asn-90, Asp-106, Asp-108, Asp-110, Asp-123, and Glu-126 together coordinate Mg(2+).

This sequence belongs to the Ntdp family. It depends on Mg(2+) as a cofactor.

The enzyme catalyses a ribonucleoside 5'-triphosphate + H2O = a ribonucleoside 5'-diphosphate + phosphate + H(+). It catalyses the reaction a ribonucleoside 5'-diphosphate + H2O = a ribonucleoside 5'-phosphate + phosphate + H(+). In terms of biological role, has nucleoside phosphatase activity towards nucleoside triphosphates and nucleoside diphosphates. This chain is Nucleoside triphosphate/diphosphate phosphatase, found in Staphylococcus haemolyticus (strain JCSC1435).